Consider the following 388-residue polypeptide: Probable RNA-binding protein sce3 (388 aa).

The interval 18-84 (ESFGSTNWAD…GGMGSGYQRD (67 aa)) is disordered. Residues 38 to 50 (DRTTSTYRATPSS) show a composition bias toward polar residues. Serine 49, serine 50, and serine 60 each carry phosphoserine. Phosphothreonine is present on threonine 61. Phosphoserine occurs at positions 64, 67, and 71. An RRM domain is found at 94 to 169 (FTAHVGNLSF…RPVRITVAEP (76 aa)). Residues 171 to 185 (RSFAREERSTGDWVR) are compositionally biased toward basic and acidic residues. The interval 171-388 (RSFAREERST…WTKIGKGRKH (218 aa)) is disordered. Serine 197 carries the phosphoserine modification. Basic and acidic residues predominate over residues 208–229 (RFRDPARDPSDRVREEPREWVR). Polar residues predominate over residues 248–257 (PRSSSNVNTE). A phosphoserine mark is found at serine 250, serine 251, and serine 252. Positions 258 to 268 (ATPSATTTTSS) are enriched in low complexity. The span at 289–349 (RVEEKLAKRT…LGDGEKKSSE (61 aa)) shows a compositional bias: basic and acidic residues. Phosphoserine is present on serine 347.

Its subcellular location is the cytoplasm. This is Probable RNA-binding protein sce3 (sce3) from Schizosaccharomyces pombe (strain 972 / ATCC 24843) (Fission yeast).